The sequence spans 309 residues: Methionyl-tRNA formyltransferase (309 aa).

S112–P115 lines the (6S)-5,6,7,8-tetrahydrofolate pocket.

Belongs to the Fmt family.

The catalysed reaction is L-methionyl-tRNA(fMet) + (6R)-10-formyltetrahydrofolate = N-formyl-L-methionyl-tRNA(fMet) + (6S)-5,6,7,8-tetrahydrofolate + H(+). Its function is as follows. Attaches a formyl group to the free amino group of methionyl-tRNA(fMet). The formyl group appears to play a dual role in the initiator identity of N-formylmethionyl-tRNA by promoting its recognition by IF2 and preventing the misappropriation of this tRNA by the elongation apparatus. The polypeptide is Methionyl-tRNA formyltransferase (Bartonella bacilliformis (strain ATCC 35685 / KC583 / Herrer 020/F12,63)).